We begin with the raw amino-acid sequence, 315 residues long: Large ribosomal subunit protein uL10 (315 aa).

Low complexity predominate over residues 285–294; sequence AAAPAASAAP. The tract at residues 285-315 is disordered; that stretch reads AAAPAASAAPAKEEKEESEESDDDMGFGLFD. Acidic residues predominate over residues 300 to 309; the sequence is EESEESDDDM.

Belongs to the universal ribosomal protein uL10 family. In terms of assembly, P0 forms a pentameric complex by interaction with dimers of P1 and P2. Phosphorylated.

Ribosomal protein P0 is the functional equivalent of E.coli protein L10. This chain is Large ribosomal subunit protein uL10 (RPLP0), found in Lithobates sylvaticus (Wood frog).